The following is a 782-amino-acid chain: LINE-1 type transposase domain-containing protein 1 (782 aa).

3 disordered regions span residues 1–30 (MSGV…TATS), 90–200 (QEGD…GGAG), and 338–397 (NKGT…SAEE). Composition is skewed to basic and acidic residues over residues 11-27 (LQKE…ERKT) and 95-107 (ISER…KVEE). Position 136 is a phosphoserine (serine 136). Composition is skewed to basic and acidic residues over residues 143 to 158 (SLER…HGRC) and 183 to 194 (EENRLKAPKESP). Over residues 347 to 396 (GEEEEISETQGEETSEGETSELGEEEGSESEEEEESSESEEEEESSESAE) the composition is skewed to acidic residues. Residues serine 407, serine 409, serine 442, serine 478, serine 490, serine 559, and serine 567 each carry the phosphoserine modification.

The protein belongs to the transposase 22 family.

This chain is LINE-1 type transposase domain-containing protein 1 (L1td1), found in Mus musculus (Mouse).